The chain runs to 863 residues: Ubiquitin carboxyl-terminal hydrolase 13 (863 aa).

Residue Ser-114 is modified to Phosphoserine. Thr-122 is modified (phosphothreonine). A UBP-type; degenerate zinc finger spans residues 187-295; sequence PVSKYANNLT…KHLAHFGIDM (109 aa). The Zn(2+) site is built by Cys-211, Cys-214, Cys-231, and His-244. Lys-311 is covalently cross-linked (Glycyl lysine isopeptide (Lys-Gly) (interchain with G-Cter in SUMO2)). Residues 336-861 enclose the USP domain; that stretch reads TGLKNLGNSC…LGYMYFYRRI (526 aa). The active-site Nucleophile is Cys-345. A Glycyl lysine isopeptide (Lys-Gly) (interchain with G-Cter in SUMO2) cross-link involves residue Lys-405. UBA domains follow at residues 652 to 693 and 727 to 767; these read DIDE…IVVH and QPPE…IFSH. His-823 (proton acceptor) is an active-site residue.

Belongs to the peptidase C19 family. In terms of assembly, interacts with UFD1. Interacts (via UBA domains) with SIAH2 (when ubiquitinated). Interacts with BAG6; the interaction is direct and may mediate UBL4A deubiquitination. Interacts (via UBA 2 domain) with AMFR; the interaction is direct. Interacts with UBL4A; may be indirect via BAG6. Interacts with NEDD4.

Its subcellular location is the cytoplasm. The catalysed reaction is Thiol-dependent hydrolysis of ester, thioester, amide, peptide and isopeptide bonds formed by the C-terminal Gly of ubiquitin (a 76-residue protein attached to proteins as an intracellular targeting signal).. Its activity is regulated as follows. Specifically inhibited by spautin-1 (specific and potent autophagy inhibitor-1), a derivative of MBCQ that binds to USP13 and inhibits deubiquitinase activity. Regulated by PIK3C3/VPS34-containing complexes. The weak deubiquitinase activity in vitro suggests the existence of some mechanism that activates the enzyme. In terms of biological role, deubiquitinase that mediates deubiquitination of target proteins such as BECN1, MITF, SKP2 and USP10 and is involved in various processes such as autophagy, endoplasmic reticulum-associated degradation (ERAD), cell cycle progression or DNA damage response. Component of a regulatory loop that controls autophagy and p53/TP53 levels: mediates deubiquitination of BECN1, a key regulator of autophagy, leading to stabilize the PIK3C3/VPS34-containing complexes. Alternatively, forms with NEDD4 a deubiquitination complex, which subsequently stabilizes VPS34 to promote autophagy. Also deubiquitinates USP10, an essential regulator of p53/TP53 stability. In turn, PIK3C3/VPS34-containing complexes regulate USP13 stability, suggesting the existence of a regulatory system by which PIK3C3/VPS34-containing complexes regulate p53/TP53 protein levels via USP10 and USP13. Recruited by nuclear UFD1 and mediates deubiquitination of SKP2, thereby regulating endoplasmic reticulum-associated degradation (ERAD). Also regulates ERAD through the deubiquitination of UBL4A a component of the BAG6/BAT3 complex. Mediates stabilization of SIAH2 independently of deubiquitinase activity: binds ubiquitinated SIAH2 and acts by impairing SIAH2 autoubiquitination. Regulates the cell cycle progression by stabilizing cell cycle proteins such as SKP2 and AURKB. In addition, plays an important role in maintaining genomic stability and in DNA replication checkpoint activation via regulation of RAP80 and TOPBP1. Deubiquitinates the multifunctional protein HMGB1 and subsequently drives its nucleocytoplasmic localization and its secretion. Positively regulates type I and type II interferon signalings by deubiquitinating STAT1 but negatively regulates antiviral response by deubiquitinating STING1. This is Ubiquitin carboxyl-terminal hydrolase 13 (USP13) from Bos taurus (Bovine).